The chain runs to 460 residues: Nuclear distribution protein PAC1 (460 aa).

A LisH domain is found at 9-41 (QAEELHKSIIAYLAANNLQDSANAMRTELGLGE). A coiled-coil region spans residues 61 to 88 (TSVVRLQKKIMDLEAQTQTLQTELNSAT). Positions 82 to 92 (TELNSATPTSN) are enriched in polar residues. Positions 82–105 (TELNSATPTSNRRGDPSSWLPAGP) are disordered. 7 WD repeats span residues 112 to 153 (SHRT…RTVK), 155 to 195 (HTKA…QNIR), 199 to 246 (GHDH…CVKT), 249 to 288 (GHADWIRDVSPSLDGKYLLSTGNDRTVRLWDISVPNPEAK), 293 to 354 (GHEH…KTLI), 355 to 394 (GHDNWVRGLVFHPSGKFLLSVSDDKTIRCWDLSQEGKCVK), and 399 to 456 (SHEH…MSLR). Residues 414–433 (IKDKGPGEETNGDVGTPKKA) form a disordered region.

It belongs to the WD repeat LIS1/nudF family. In terms of assembly, self-associates. Interacts with NDL1 and dynein.

The protein resides in the cytoplasm. It is found in the cytoskeleton. The protein localises to the spindle pole. Its function is as follows. Positively regulates the activity of the minus-end directed microtubule motor protein dynein. May enhance dynein-mediated microtubule sliding by targeting dynein to the microtubule plus end. Required for nuclear migration during vegetative growth as well as development. Required for retrograde early endosome (EE) transport from the hyphal tip. Required for localization of dynein to the mitotic spindle poles. Recruits additional proteins to the dynein complex at SPBs. This Gibberella zeae (strain ATCC MYA-4620 / CBS 123657 / FGSC 9075 / NRRL 31084 / PH-1) (Wheat head blight fungus) protein is Nuclear distribution protein PAC1.